We begin with the raw amino-acid sequence, 138 residues long: Invertebrate-type lysozyme 6 (138 aa).

Positions 1 to 18 (MFVKLCGILAFAVTYASS) are cleaved as a signal peptide. The I-type lysozyme domain occupies 19–138 (DCLQCICKKE…WNGIKGLGCS (120 aa)). 6 cysteine pairs are disulfide-bonded: Cys20–Cys106, Cys25–Cys31, Cys36–Cys45, Cys58–Cys86, Cys76–Cys82, and Cys98–Cys120. Glu28 serves as the catalytic Proton donor. Residue Asp39 is the Nucleophile of the active site. 51–57 (KLSYYKD) is a binding site for substrate. Substrate is bound by residues Tyr90 and 113–115 (HNG).

Belongs to the glycosyl hydrolase 22 family. Type-I lysozyme subfamily. In terms of tissue distribution, expressed in pharyngeal gland cells and duct projections, coelomocytes and intestine.

It catalyses the reaction Hydrolysis of (1-&gt;4)-beta-linkages between N-acetylmuramic acid and N-acetyl-D-glucosamine residues in a peptidoglycan and between N-acetyl-D-glucosamine residues in chitodextrins.. Has bacteriolytic activity against Gram-positive bacteria. The polypeptide is Invertebrate-type lysozyme 6 (Caenorhabditis elegans).